An 800-amino-acid chain; its full sequence is Phenylalanine--tRNA ligase beta subunit (800 aa).

A tRNA-binding domain is found at 39–154 (SKDIKNLVVG…TEVEPGTDAL (116 aa)). A B5 domain is found at 408–483 (SFVTPIDITA…RIYGYDEIPS (76 aa)). Positions 461, 467, 470, and 471 each coordinate Mg(2+). Residues 708–800 (PKFPGVTRDI…ALQAQGATIR (93 aa)) form the FDX-ACB domain.

The protein belongs to the phenylalanyl-tRNA synthetase beta subunit family. Type 1 subfamily. Tetramer of two alpha and two beta subunits. Mg(2+) serves as cofactor.

The protein resides in the cytoplasm. The enzyme catalyses tRNA(Phe) + L-phenylalanine + ATP = L-phenylalanyl-tRNA(Phe) + AMP + diphosphate + H(+). This chain is Phenylalanine--tRNA ligase beta subunit, found in Staphylococcus haemolyticus (strain JCSC1435).